Reading from the N-terminus, the 161-residue chain is Ribonuclease H (161 aa).

The region spanning 3-144 is the RNase H type-1 domain; it reads VLKQLSIFTD…CDTLARVAAE (142 aa). 4 residues coordinate Mg(2+): aspartate 12, glutamate 50, aspartate 72, and aspartate 136.

This sequence belongs to the RNase H family. Monomer. Mg(2+) serves as cofactor.

The protein localises to the cytoplasm. The enzyme catalyses Endonucleolytic cleavage to 5'-phosphomonoester.. In terms of biological role, endonuclease that specifically degrades the RNA of RNA-DNA hybrids. The protein is Ribonuclease H of Shewanella woodyi (strain ATCC 51908 / MS32).